The sequence spans 294 residues: MTSRRIINREQRQCSQIRPYLYVSGLAALSPRVLSRFCVCINLIPGFRLSAPPHMKVVHLPLQDNETTDLSPHWANVYKEIEEARKGAGRALLLCAMGISRSATFGIAYVMQYEKKTLHDSYKAVQLARNIICPNVGFFQQLIDLEQKLRGKVSCKIIEPLPGCKVPDVIWQELYDEMIMSMSQDDRHSLASCNLSARSTTNDTMSLRSLNMVNDTSRSLASFHLTHRPIGASPTLLVPSSSSSSSVRGPIPLQRAHTEPPKEASILPKSALRDKSKSGEKKKKWRLSFHKDVV.

One can recognise a Tyrosine-protein phosphatase domain in the interval 13–151 (QCSQIRPYLY…LIDLEQKLRG (139 aa)). The Phosphocysteine intermediate role is filled by C95. The disordered stretch occupies residues 234–294 (PTLLVPSSSS…WRLSFHKDVV (61 aa)).

Belongs to the protein-tyrosine phosphatase family. Non-receptor class dual specificity subfamily.

This is an uncharacterized protein from Caenorhabditis elegans.